Reading from the N-terminus, the 361-residue chain is Uroporphyrinogen decarboxylase (361 aa).

Substrate-binding positions include 27-31 (RQAGR), aspartate 77, tyrosine 154, threonine 209, and histidine 327.

Belongs to the uroporphyrinogen decarboxylase family. In terms of assembly, homodimer.

Its subcellular location is the cytoplasm. The enzyme catalyses uroporphyrinogen III + 4 H(+) = coproporphyrinogen III + 4 CO2. The protein operates within porphyrin-containing compound metabolism; protoporphyrin-IX biosynthesis; coproporphyrinogen-III from 5-aminolevulinate: step 4/4. Its function is as follows. Catalyzes the decarboxylation of four acetate groups of uroporphyrinogen-III to yield coproporphyrinogen-III. In Coxiella burnetii (strain RSA 331 / Henzerling II), this protein is Uroporphyrinogen decarboxylase.